A 247-amino-acid chain; its full sequence is Aliphatic sulfonates import ATP-binding protein SsuB 3 (247 aa).

The ABC transporter domain maps to 28–242 (VSVRGLQRRY…ALRSILLEEL (215 aa)). An ATP-binding site is contributed by 60 to 67 (GESGCGKT).

Belongs to the ABC transporter superfamily. Aliphatic sulfonates importer (TC 3.A.1.17.2) family. As to quaternary structure, the complex is composed of two ATP-binding proteins (SsuB), two transmembrane proteins (SsuC) and a solute-binding protein (SsuA).

Its subcellular location is the cell inner membrane. It carries out the reaction ATP + H2O + aliphatic sulfonate-[sulfonate-binding protein]Side 1 = ADP + phosphate + aliphatic sulfonateSide 2 + [sulfonate-binding protein]Side 1.. Its function is as follows. Part of the ABC transporter complex SsuABC involved in aliphatic sulfonates import. Responsible for energy coupling to the transport system. This is Aliphatic sulfonates import ATP-binding protein SsuB 3 from Paraburkholderia xenovorans (strain LB400).